The primary structure comprises 57 residues: Toxin GhoT (57 aa).

Helical transmembrane passes span 7–27 (ILIF…FISH) and 37–57 (AFLV…FSLF).

It belongs to the GhoT/OrtT toxin family.

The protein resides in the cell inner membrane. Toxic component of a type V toxin-antitoxin (TA) system. Causes membrane damage when induced by MqsR, slowing cell growth and leading to the formation of dormant persister cells; involved with GhoS, its antitoxin, in reducing cell growth during antibacterial stress. Its toxic effects are neutralized by GhoS, which digests ghoT transcripts in a sequence-specific manner. The sequence is that of Toxin GhoT from Escherichia coli O157:H7.